Consider the following 1119-residue polypeptide: Ubiquitin-associated protein 2 (1119 aa).

The interval 1–26 is disordered; it reads MMTSVSSDHCRGAREKPQISAAQSTQ. Over residues 8 to 17 the composition is skewed to basic and acidic residues; sequence DHCRGAREKP. The region spanning 48–92 is the UBA domain; that stretch reads KNDSDFEAKVKQLMEVTGKNQDECIVALHDCNGDVNKAINILLEG. A coiled-coil region spans residues 105–130; the sequence is KKKNFAKENSENKENREKKSEKESSR. The segment covering 110–130 has biased composition (basic and acidic residues); sequence AKENSENKENREKKSEKESSR. Disordered regions lie at residues 110–202, 385–476, 622–736, 853–905, 937–966, 982–1020, and 1082–1119; these read AKEN…YSDS, LGQF…SPST, VHNR…SSHQ, RDGS…VNPA, SAKQHGVNLSTPTPPFQQASGYGQHGYSTG, GGYAGSSQAPNKSAGSGPGKGVSVSSSTTGLPDMTGSVY, and HLPQDAQSGSGQRSQPSSLQPKSQASKPAYGNSPYWTN. At Arg166 the chain carries Omega-N-methylarginine. Residues 168–182 are compositionally biased toward basic residues; that stretch reads KRARGRGFGRGRGRG. Residues 389–407 are compositionally biased toward low complexity; it reads TTTPSTQQNSTSHPTTTTS. Ser432, Ser439, Ser473, and Ser630 each carry phosphoserine. The span at 435 to 447 shows a compositional bias: low complexity; the sequence is LSQLSQRQQHQSQ. Residues 651-662 are compositionally biased toward polar residues; the sequence is SQQTLDTPKTTG. Residues 663-678 are compositionally biased toward low complexity; that stretch reads PPSALPSVSSLPSTTS. Polar residues predominate over residues 679–694; the sequence is CTALLPSTSQHTGDLT. Low complexity-rich tracts occupy residues 695–736 and 874–900; these read SSPL…SSHQ and SASPAPATTPAQPQQSQSQTHHTAQQP. Polar residues predominate over residues 943-957; the sequence is VNLSTPTPPFQQASG. 2 stretches are compositionally biased toward low complexity: residues 1002-1011 and 1088-1102; these read GVSVSSSTTG and QSGSGQRSQPSSLQP.

In terms of assembly, may interact with ANXA2.

The protein resides in the nucleus. It localises to the chromosome. The protein localises to the cytoplasm. Its function is as follows. Recruits the ubiquitination machinery to RNA polymerase II for polyubiquitination, removal and degradation, when the transcription-coupled nucleotide excision repair (TC-NER) machinery fails to resolve DNA damage. May promote the degradation of ANXA2. The protein is Ubiquitin-associated protein 2 of Homo sapiens (Human).